The following is a 197-amino-acid chain: Imidazoleglycerol-phosphate dehydratase (197 aa).

It belongs to the imidazoleglycerol-phosphate dehydratase family.

The protein resides in the cytoplasm. It catalyses the reaction D-erythro-1-(imidazol-4-yl)glycerol 3-phosphate = 3-(imidazol-4-yl)-2-oxopropyl phosphate + H2O. Its pathway is amino-acid biosynthesis; L-histidine biosynthesis; L-histidine from 5-phospho-alpha-D-ribose 1-diphosphate: step 6/9. The chain is Imidazoleglycerol-phosphate dehydratase from Pseudomonas putida (strain ATCC 700007 / DSM 6899 / JCM 31910 / BCRC 17059 / LMG 24140 / F1).